A 116-amino-acid chain; its full sequence is CDKN2AIP N-terminal-like protein (116 aa).

Met1 carries the post-translational modification N-acetylmethionine. The region spanning 24 to 116 is the XRN2-binding (XTBD) domain; the sequence is AEQFRSYSES…RSELMKKHQS (93 aa).

The protein belongs to the CARF family. In terms of assembly, interacts with XRN2; the interaction is direct.

This is CDKN2AIP N-terminal-like protein (CDKN2AIPNL) from Homo sapiens (Human).